Consider the following 499-residue polypeptide: Cysteine--tRNA ligase (499 aa).

Cysteine 31 contributes to the Zn(2+) binding site. Positions valine 33 to histidine 43 match the 'HIGH' region motif. Zn(2+) is bound by residues cysteine 215, histidine 240, and glutamate 244. The 'KMSKS' region motif lies at lysine 272–serine 276. Residue lysine 275 participates in ATP binding.

Belongs to the class-I aminoacyl-tRNA synthetase family. Monomer. It depends on Zn(2+) as a cofactor.

The protein localises to the cytoplasm. It carries out the reaction tRNA(Cys) + L-cysteine + ATP = L-cysteinyl-tRNA(Cys) + AMP + diphosphate. The chain is Cysteine--tRNA ligase from Synechococcus sp. (strain WH7803).